Reading from the N-terminus, the 209-residue chain is Orotate phosphoribosyltransferase (209 aa).

5-phospho-alpha-D-ribose 1-diphosphate-binding positions include R96, K100, H102, and 122–130 (EDLISTGGS). S126 serves as a coordination point for orotate.

Belongs to the purine/pyrimidine phosphoribosyltransferase family. PyrE subfamily. Homodimer. Mg(2+) is required as a cofactor.

It catalyses the reaction orotidine 5'-phosphate + diphosphate = orotate + 5-phospho-alpha-D-ribose 1-diphosphate. The protein operates within pyrimidine metabolism; UMP biosynthesis via de novo pathway; UMP from orotate: step 1/2. Catalyzes the transfer of a ribosyl phosphate group from 5-phosphoribose 1-diphosphate to orotate, leading to the formation of orotidine monophosphate (OMP). The protein is Orotate phosphoribosyltransferase of Streptococcus sanguinis (strain SK36).